Consider the following 214-residue polypeptide: Cysteine-rich venom protein LEI1 (214 aa).

The first 18 residues, 1–18 (MIAFILLSLAAVLQQSFG), serve as a signal peptide directing secretion. Residues 37 to 165 (VNMHNSLRRS…YYSYFYVCQY (129 aa)) enclose the SCP domain. 5 disulfide bridges follow: Cys74/Cys152, Cys91/Cys166, Cys147/Cys163, Cys185/Cys192, and Cys188/Cys197. One can recognise a ShKT domain in the interval 201–214 (CTVENKFTNCNTLV).

Belongs to the CRISP family. In terms of tissue distribution, expressed by the venom gland.

The protein localises to the secreted. Functionally, blocks contraction of smooth muscle elicited by high potassium-induced depolarization, but does not block caffeine-stimulated contraction. May target voltage-gated calcium channels on smooth muscle. This chain is Cysteine-rich venom protein LEI1, found in Leioheterodon madagascariensis (Malagasy giant hognose snake).